We begin with the raw amino-acid sequence, 215 residues long: Peroxiredoxin (215 aa).

Positions 6-161 (PLIGEEFPRV…ILRAVKALQT (156 aa)) constitute a Thioredoxin domain. The active-site Cysteine sulfenic acid (-SOH) intermediate is the C48. Residue R124 participates in substrate binding. C205 and C211 are oxidised to a cystine.

Belongs to the peroxiredoxin family. Prx6 subfamily. As to quaternary structure, homodecamer. Pentamer of dimers that assemble into a ring structure.

The protein localises to the cytoplasm. The catalysed reaction is a hydroperoxide + [thioredoxin]-dithiol = an alcohol + [thioredoxin]-disulfide + H2O. Its function is as follows. Thiol-specific peroxidase that catalyzes the reduction of hydrogen peroxide and organic hydroperoxides to water and alcohols, respectively. Plays a role in cell protection against oxidative stress by detoxifying peroxides. This Thermotoga maritima (strain ATCC 43589 / DSM 3109 / JCM 10099 / NBRC 100826 / MSB8) protein is Peroxiredoxin.